A 384-amino-acid polypeptide reads, in one-letter code: D-galactosamine-6-phosphate deaminase AgaS (384 aa).

2 consecutive SIS domains span residues 45–197 (LEPL…SQTF) and 215–364 (SEGV…PDTP).

It belongs to the SIS family. AgaS subfamily.

It catalyses the reaction D-galactosamine 6-phosphate + H2O = D-tagatopyranose 1-phosphate + NH4(+). Functionally, catalyzes the isomerization-deamination of galactosamine 6-phosphate to form tagatofuranose 6-phosphate and ammonium ion. The chain is D-galactosamine-6-phosphate deaminase AgaS from Escherichia coli.